The primary structure comprises 96 residues: Protein RnfH (96 aa).

It belongs to the UPF0125 (RnfH) family.

This chain is Protein RnfH, found in Klebsiella pneumoniae (strain 342).